The following is a 128-amino-acid chain: Histone H2A type 1-H (128 aa).

The disordered stretch occupies residues 1-22; that stretch reads MSGRGKQGGKARAKAKTRSSRA. Position 2 is an N-acetylserine (Ser-2). Ser-2 bears the Phosphoserine; by RPS6KA5 mark. Residue Arg-4 is modified to Citrulline; alternate. Symmetric dimethylarginine; by PRMT5; alternate is present on Arg-4. Residues Lys-6 and Lys-10 each carry the N6-(2-hydroxyisobutyryl)lysine; alternate modification. Lys-6 bears the N6-(beta-hydroxybutyryl)lysine; alternate mark. Over residues 7–19 the composition is skewed to basic residues; sequence QGGKARAKAKTRS. The residue at position 10 (Lys-10) is an N6-lactoyllysine; alternate. Position 10 is an N6-succinyllysine; alternate (Lys-10). Glycyl lysine isopeptide (Lys-Gly) (interchain with G-Cter in ubiquitin) cross-links involve residues Lys-14 and Lys-16. Lys-37 is subject to N6-(2-hydroxyisobutyryl)lysine; alternate. An N6-(beta-hydroxybutyryl)lysine; alternate modification is found at Lys-37. Lys-37 carries the post-translational modification N6-crotonyllysine; alternate. Residues Lys-75 and Lys-76 each carry the N6-(2-hydroxyisobutyryl)lysine modification. N6-(2-hydroxyisobutyryl)lysine; alternate is present on Lys-96. The residue at position 96 (Lys-96) is an N6-succinyllysine; alternate. An N6-glutaryllysine; alternate modification is found at Lys-96. At Gln-105 the chain carries N5-methylglutamine. N6-(2-hydroxyisobutyryl)lysine; alternate is present on Lys-119. Residues Lys-119 and Lys-120 each carry the N6-crotonyllysine; alternate modification. An N6-glutaryllysine; alternate mark is found at Lys-119 and Lys-120. Lys-120 carries the post-translational modification N6-(beta-hydroxybutyryl)lysine; alternate. Lys-120 participates in a covalent cross-link: Glycyl lysine isopeptide (Lys-Gly) (interchain with G-Cter in ubiquitin); alternate. Position 121 is a phosphothreonine; by DCAF1 (Thr-121). N6-(beta-hydroxybutyryl)lysine; alternate is present on Lys-126. Lys-126 bears the N6-crotonyllysine; alternate mark. Residue Lys-126 is modified to N6-glutaryllysine; alternate.

It belongs to the histone H2A family. The nucleosome is a histone octamer containing two molecules each of H2A, H2B, H3 and H4 assembled in one H3-H4 heterotetramer and two H2A-H2B heterodimers. The octamer wraps approximately 147 bp of DNA. Deiminated on Arg-4 in granulocytes upon calcium entry. In terms of processing, monoubiquitination of Lys-120 (H2AK119Ub) by RING1, TRIM37 and RNF2/RING2 complex gives a specific tag for epigenetic transcriptional repression and participates in X chromosome inactivation of female mammals. It is involved in the initiation of both imprinted and random X inactivation. Ubiquitinated H2A is enriched in inactive X chromosome chromatin. Ubiquitination of H2A functions downstream of methylation of 'Lys-27' of histone H3 (H3K27me). H2AK119Ub by RNF2/RING2 can also be induced by ultraviolet and may be involved in DNA repair. Following DNA double-strand breaks (DSBs), it is ubiquitinated through 'Lys-63' linkage of ubiquitin moieties by the E2 ligase UBE2N and the E3 ligases RNF8 and RNF168, leading to the recruitment of repair proteins to sites of DNA damage. Ubiquitination at Lys-14 and Lys-16 (H2AK13Ub and H2AK15Ub, respectively) in response to DNA damage is initiated by RNF168 that mediates monoubiquitination at these 2 sites, and 'Lys-63'-linked ubiquitin are then conjugated to monoubiquitin; RNF8 is able to extend 'Lys-63'-linked ubiquitin chains in vitro. H2AK119Ub and ionizing radiation-induced 'Lys-63'-linked ubiquitination (H2AK13Ub and H2AK15Ub) are distinct events. Post-translationally, phosphorylation on Ser-2 (H2AS1ph) is enhanced during mitosis. Phosphorylation on Ser-2 by RPS6KA5/MSK1 directly represses transcription. Acetylation of H3 inhibits Ser-2 phosphorylation by RPS6KA5/MSK1. Phosphorylation at Thr-121 (H2AT120ph) by DCAF1 is present in the regulatory region of many tumor suppresor genes and down-regulates their transcription. Symmetric dimethylation on Arg-4 by the PRDM1/PRMT5 complex may play a crucial role in the germ-cell lineage. In terms of processing, glutamine methylation at Gln-105 (H2AQ104me) by FBL is specifically dedicated to polymerase I. It is present at 35S ribosomal DNA locus and impairs binding of the FACT complex. Post-translationally, crotonylation (Kcr) is specifically present in male germ cells and marks testis-specific genes in post-meiotic cells, including X-linked genes that escape sex chromosome inactivation in haploid cells. Crotonylation marks active promoters and enhancers and confers resistance to transcriptional repressors. It is also associated with post-meiotically activated genes on autosomes. Hydroxybutyrylation of histones is induced by starvation. In terms of processing, lactylated in macrophages by EP300/P300 by using lactoyl-CoA directly derived from endogenous or exogenous lactate, leading to stimulates gene transcription.

Its subcellular location is the nucleus. It is found in the chromosome. Its function is as follows. Core component of nucleosome. Nucleosomes wrap and compact DNA into chromatin, limiting DNA accessibility to the cellular machineries which require DNA as a template. Histones thereby play a central role in transcription regulation, DNA repair, DNA replication and chromosomal stability. DNA accessibility is regulated via a complex set of post-translational modifications of histones, also called histone code, and nucleosome remodeling. This is Histone H2A type 1-H from Mus musculus (Mouse).